Consider the following 373-residue polypeptide: Anhydro-N-acetylmuramic acid kinase (373 aa).

Gly-13 to Asp-20 contributes to the ATP binding site.

This sequence belongs to the anhydro-N-acetylmuramic acid kinase family.

The enzyme catalyses 1,6-anhydro-N-acetyl-beta-muramate + ATP + H2O = N-acetyl-D-muramate 6-phosphate + ADP + H(+). Its pathway is amino-sugar metabolism; 1,6-anhydro-N-acetylmuramate degradation. It functions in the pathway cell wall biogenesis; peptidoglycan recycling. Functionally, catalyzes the specific phosphorylation of 1,6-anhydro-N-acetylmuramic acid (anhMurNAc) with the simultaneous cleavage of the 1,6-anhydro ring, generating MurNAc-6-P. Is required for the utilization of anhMurNAc either imported from the medium or derived from its own cell wall murein, and thus plays a role in cell wall recycling. This Brucella abortus (strain 2308) protein is Anhydro-N-acetylmuramic acid kinase.